The chain runs to 821 residues: DNA replication licensing factor MCM6 (821 aa).

Residue M1 is modified to N-acetylmethionine. S13, S219, and S271 each carry phosphoserine. At T278 the chain carries Phosphothreonine. Residues 346–553 (LYHNLCTSLF…TDYAIARRIV (208 aa)) form the MCM domain. 7 residues coordinate ATP: H359, S399, T400, A401, K402, S403, and N504. Residues 528 to 531 (SRFD) carry the Arginine finger motif. Residues R619 and E622 each coordinate ADP. Position 643 is an N6-acetyllysine (K643). The disordered stretch occupies residues 676–706 (VDEGPDGINGHADSPAPASGINGHSEDMNQD). S689 and S762 each carry phosphoserine. Residue T791 is modified to Phosphothreonine.

This sequence belongs to the MCM family. Component of the MCM2-7 complex. The complex forms a toroidal hexameric ring with the proposed subunit order MCM2-MCM6-MCM4-MCM7-MCM3-MCM5. Component of the CMG helicase complex, a hexameric ring of related MCM2-7 subunits stabilized by CDC45 and the tetrameric GINS complex. May interact with MCM10. Interacts with TIPIN. Interacts with CDT1. Interacts with MCMBP. Interacts with DDI2. O-glycosylated (O-GlcNAcylated), in a cell cycle-dependent manner.

Its subcellular location is the nucleus. It is found in the chromosome. It carries out the reaction ATP + H2O = ADP + phosphate + H(+). Acts as a component of the MCM2-7 complex (MCM complex) which is the replicative helicase essential for 'once per cell cycle' DNA replication initiation and elongation in eukaryotic cells. Core component of CDC45-MCM-GINS (CMG) helicase, the molecular machine that unwinds template DNA during replication, and around which the replisome is built. The active ATPase sites in the MCM2-7 ring are formed through the interaction surfaces of two neighboring subunits such that a critical structure of a conserved arginine finger motif is provided in trans relative to the ATP-binding site of the Walker A box of the adjacent subunit. The six ATPase active sites, however, are likely to contribute differentially to the complex helicase activity. The sequence is that of DNA replication licensing factor MCM6 (MCM6) from Bos taurus (Bovine).